Reading from the N-terminus, the 816-residue chain is Oxysterol-binding protein-related protein 1D (816 aa).

Positions 92-229 (GAGVAGIMYK…WVEAFQVAKD (138 aa)) constitute a PH domain. Residues 290 to 321 (KHIILLDTLRQLETEKIELEATVVDETKEHDS) are a coiled coil. Positions 340-362 (SASDSEADNESQDGADVESDEDD) are disordered. Acidic residues predominate over residues 344–362 (SEADNESQDGADVESDEDD). The stretch at 735–764 (NGEYESANAEKLRLEQLQRQARRLQEKGWK) forms a coiled coil.

Belongs to the OSBP family. In terms of tissue distribution, expressed in roots, leaves, stems and flowers.

Functionally, may be involved in the transport of sterols. This chain is Oxysterol-binding protein-related protein 1D (ORP1D), found in Arabidopsis thaliana (Mouse-ear cress).